The following is a 211-amino-acid chain: Arginine exporter protein ArgO (211 aa).

A run of 6 helical transmembrane segments spans residues 1–21, 37–57, 68–88, 111–131, 147–167, and 179–199; these read MISY…PLGP, LMIA…GIFG, LLAL…FGAL, IIAT…DTFV, WFAL…ALLA, and AQRI…FQLA.

This sequence belongs to the LysE/ArgO transporter (TC 2.A.75) family.

It is found in the cell inner membrane. The catalysed reaction is L-arginine(in) = L-arginine(out). Its function is as follows. Involved in the export of arginine. Important to control the intracellular level of arginine and the correct balance between arginine and lysine. This is Arginine exporter protein ArgO from Salmonella paratyphi C (strain RKS4594).